Reading from the N-terminus, the 242-residue chain is HTH-type transcriptional regulator GadW (242 aa).

Residues 139-236 enclose the HTH araC/xylS-type domain; the sequence is GKVERLISFD…GVTPHQFSQH (98 aa). 2 consecutive DNA-binding regions (H-T-H motif) follow at residues 156–177 and 203–226; these read RDIA…QDEN and LHTI…RQYY.

As to quaternary structure, homodimer.

Its function is as follows. Depending on the conditions (growth phase and medium), acts as a positive or negative regulator of gadA and gadBC. Repression occurs directly or via the repression of the expression of gadX. Activation occurs directly by the binding of GadW to the gadA and gadBC promoters. This chain is HTH-type transcriptional regulator GadW (gadW), found in Escherichia coli O6:H1 (strain CFT073 / ATCC 700928 / UPEC).